We begin with the raw amino-acid sequence, 331 residues long: Protein C10 (331 aa).

This sequence belongs to the poxviridae C4/C10 protein family.

The chain is Protein C10 from Vaccinia virus (strain Copenhagen) (VACV).